The chain runs to 710 residues: Chaperonin-containing T-complex member BBS12 (710 aa).

It belongs to the TCP-1 chaperonin family. BBS12 subfamily. Component of the chaperonin-containing T-complex (TRiC), a heterooligomeric complex of about 850 to 900 kDa that forms two stacked rings, 12 to 16 nm in diameter. Interacts with MKKS.

It localises to the cell projection. Its subcellular location is the cilium. Functionally, component of the chaperonin-containing T-complex (TRiC), a molecular chaperone complex that assists the folding of proteins upon ATP hydrolysis. As part of the TRiC complex may play a role in the assembly of BBSome, a complex involved in ciliogenesis regulating transports vesicles to the cilia. Involved in adipogenic differentiation. This is Chaperonin-containing T-complex member BBS12 (BBS12) from Homo sapiens (Human).